The primary structure comprises 892 residues: Polyribonucleotide nucleotidyltransferase (892 aa).

Positions 407 to 427 are disordered; the sequence is YMHNYEMPPYSTGETGRVGSP. The Mg(2+) site is built by D521 and D527. The KH domain occupies 587 to 646; that stretch reads PRIITTTVPVDKIGEVIGPKGKMINQIQEDTGAEIAIEDDGTVYISSEGGEAAEKAKEII. The region spanning 658–730 is the S1 motif domain; the sequence is GETYNGKVVK…DRGKISLAIP (73 aa). Residues 727 to 892 are disordered; the sequence is LAIPGFEDQE…VRRDFDPFED (166 aa). Composition is skewed to basic and acidic residues over residues 739-844 and 851-877; these read APRR…DRRS and RRDDRNPRYAADENYDEYRADREERSE.

Belongs to the polyribonucleotide nucleotidyltransferase family. Mg(2+) serves as cofactor.

It is found in the cytoplasm. It carries out the reaction RNA(n+1) + phosphate = RNA(n) + a ribonucleoside 5'-diphosphate. Involved in mRNA degradation. Catalyzes the phosphorolysis of single-stranded polyribonucleotides processively in the 3'- to 5'-direction. The sequence is that of Polyribonucleotide nucleotidyltransferase from Bifidobacterium adolescentis (strain ATCC 15703 / DSM 20083 / NCTC 11814 / E194a).